The chain runs to 282 residues: Pantothenate synthetase (282 aa).

ATP is bound at residue 30-37; the sequence is MGFLHDGH. His-37 acts as the Proton donor in catalysis. Residue Gln-60 coordinates (R)-pantoate. Residue Gln-60 participates in beta-alanine binding. 146 to 149 is a binding site for ATP; it reads GQKD. Gln-152 is a (R)-pantoate binding site. ATP contacts are provided by residues Ile-175 and 183–186; that span reads KSSR.

Belongs to the pantothenate synthetase family. Homodimer.

It is found in the cytoplasm. The catalysed reaction is (R)-pantoate + beta-alanine + ATP = (R)-pantothenate + AMP + diphosphate + H(+). It participates in cofactor biosynthesis; (R)-pantothenate biosynthesis; (R)-pantothenate from (R)-pantoate and beta-alanine: step 1/1. In terms of biological role, catalyzes the condensation of pantoate with beta-alanine in an ATP-dependent reaction via a pantoyl-adenylate intermediate. The polypeptide is Pantothenate synthetase (Campylobacter jejuni subsp. doylei (strain ATCC BAA-1458 / RM4099 / 269.97)).